Here is a 208-residue protein sequence, read N- to C-terminus: Ribosomal RNA large subunit methyltransferase E (208 aa).

Residues Gly-63, Trp-65, Asp-83, Asp-99, and Asp-124 each contribute to the S-adenosyl-L-methionine site. Catalysis depends on Lys-164, which acts as the Proton acceptor.

Belongs to the class I-like SAM-binding methyltransferase superfamily. RNA methyltransferase RlmE family.

It is found in the cytoplasm. The catalysed reaction is uridine(2552) in 23S rRNA + S-adenosyl-L-methionine = 2'-O-methyluridine(2552) in 23S rRNA + S-adenosyl-L-homocysteine + H(+). In terms of biological role, specifically methylates the uridine in position 2552 of 23S rRNA at the 2'-O position of the ribose in the fully assembled 50S ribosomal subunit. The sequence is that of Ribosomal RNA large subunit methyltransferase E from Salmonella typhi.